A 68-amino-acid polypeptide reads, in one-letter code: Palustrin-1c (68 aa).

An N-terminal signal peptide occupies residues 1-22 (MFTMKKSLLLLFFLGTISLSLC). Positions 23–39 (EEERGADEEEGDGEKLT) are excised as a propeptide. Cysteines 62 and 68 form a disulfide.

In terms of tissue distribution, expressed by the skin glands.

Its subcellular location is the secreted. Its function is as follows. Antimicrobial peptide. The sequence is that of Palustrin-1c from Odorrana versabilis (Chinese bamboo leaf odorous frog).